A 138-amino-acid chain; its full sequence is Large ribosomal subunit protein uL16 (138 aa).

Residues 1 to 19 show a composition bias toward basic residues; the sequence is MLIPRKVAHRKQHHPKRTG. The disordered stretch occupies residues 1–22; that stretch reads MLIPRKVAHRKQHHPKRTGAAK.

This sequence belongs to the universal ribosomal protein uL16 family. Part of the 50S ribosomal subunit.

Its function is as follows. Binds 23S rRNA and is also seen to make contacts with the A and possibly P site tRNAs. In Parafrankia sp. (strain EAN1pec), this protein is Large ribosomal subunit protein uL16.